The sequence spans 167 residues: Phosphopantetheine adenylyltransferase (167 aa).

Residue Ser-11 coordinates substrate. ATP-binding positions include 11–12 and His-19; that span reads SF. Substrate contacts are provided by Lys-43, Thr-76, and Arg-90. ATP is bound by residues 91-93, Glu-101, and 126-132; these read GIR and YDALSST.

This sequence belongs to the bacterial CoaD family. As to quaternary structure, homohexamer. Mg(2+) serves as cofactor.

It localises to the cytoplasm. The catalysed reaction is (R)-4'-phosphopantetheine + ATP + H(+) = 3'-dephospho-CoA + diphosphate. It participates in cofactor biosynthesis; coenzyme A biosynthesis; CoA from (R)-pantothenate: step 4/5. Functionally, reversibly transfers an adenylyl group from ATP to 4'-phosphopantetheine, yielding dephospho-CoA (dPCoA) and pyrophosphate. This chain is Phosphopantetheine adenylyltransferase, found in Lacticaseibacillus paracasei (strain ATCC 334 / BCRC 17002 / CCUG 31169 / CIP 107868 / KCTC 3260 / NRRL B-441) (Lactobacillus paracasei).